The sequence spans 381 residues: MSLNMFWFLPTHGDGHYLGTEEGSRPVDHGYLQQIAQAADRLGYTGVLIPTGRSCEDAWLVAASMIPVTQRLKFLVALRPSVTSPTVAARQAATLDRLSNGRALFNLVTGSDPQELAGDGVFLDHRERYEASAEFTQVWRRLLLGETVNFNGKHIHVRGAKLLFPPIQQPYPPLYFGGSSDVAQELAAEQVDFYLTWGEPPELVKEKIEQVRAKAAAHGRKIRFGIRLHVIVRETSDEAWQAAERLISHLDDETIAKAQAAFARTDSVGQQRMAALHNGKRDNLEISPNLWAGVGLVRGGAGTALVGDGPTVAARINEYAALGIDSFVLSGYPHLEEAYRVGELLFPHLDVAIPEIPQPQPLNPQGEAVANEFIPRKVAQS.

Belongs to the SsuD family. Homotetramer.

It carries out the reaction an alkanesulfonate + FMNH2 + O2 = an aldehyde + FMN + sulfite + H2O + 2 H(+). Functionally, catalyzes the desulfonation of aliphatic sulfonates. The polypeptide is Alkanesulfonate monooxygenase (Escherichia coli O17:K52:H18 (strain UMN026 / ExPEC)).